Here is a 147-residue protein sequence, read N- to C-terminus: Nucleoside diphosphate kinase (147 aa).

Residues K9, F57, R85, T91, R102, and N112 each contribute to the ATP site. Catalysis depends on H115, which acts as the Pros-phosphohistidine intermediate.

It belongs to the NDK family. In terms of assembly, homotetramer. Mg(2+) serves as cofactor.

It localises to the cytoplasm. It carries out the reaction a 2'-deoxyribonucleoside 5'-diphosphate + ATP = a 2'-deoxyribonucleoside 5'-triphosphate + ADP. The enzyme catalyses a ribonucleoside 5'-diphosphate + ATP = a ribonucleoside 5'-triphosphate + ADP. Its function is as follows. Major role in the synthesis of nucleoside triphosphates other than ATP. The ATP gamma phosphate is transferred to the NDP beta phosphate via a ping-pong mechanism, using a phosphorylated active-site intermediate. In Listeria monocytogenes serotype 4b (strain CLIP80459), this protein is Nucleoside diphosphate kinase.